A 749-amino-acid polypeptide reads, in one-letter code: ATP-dependent zinc metalloprotease FtsH 3 (749 aa).

Over residues 1–17 the composition is skewed to basic and acidic residues; the sequence is MTGDPPERRSNGDRLPA. The tract at residues 1-67 is disordered; the sequence is MTGDPPERRS…GRNGGGMRPF (67 aa). The Cytoplasmic segment spans residues 1 to 75; it reads MTGDPPERRS…PFRFPGGRWG (75 aa). A helical membrane pass occupies residues 76-96; the sequence is ILVFILVLLGLNWWISSNALA. The Extracellular segment spans residues 97-186; it reads PSERVRVPYS…NASPADNGPS (90 aa). The chain crosses the membrane as a helical span at residues 187 to 207; that stretch reads LLVSILLGFGPVILIIALFVF. The Cytoplasmic segment spans residues 208-749; that stretch reads LSRRMAGAAG…LGGSVRAGDA (542 aa). ATP is bound at residue 281 to 288; the sequence is GQPGTGKT. Histidine 504 serves as a coordination point for Zn(2+). Glutamate 505 is a catalytic residue. Zn(2+) contacts are provided by histidine 508 and aspartate 580. Residues 679–689 are compositionally biased toward basic and acidic residues; sequence GLEHMRPERVE. Residues 679–749 form a disordered region; that stretch reads GLEHMRPERV…LGGSVRAGDA (71 aa).

This sequence in the central section; belongs to the AAA ATPase family. In the C-terminal section; belongs to the peptidase M41 family. Homohexamer. It depends on Zn(2+) as a cofactor.

The protein resides in the cell membrane. Its function is as follows. Acts as a processive, ATP-dependent zinc metallopeptidase for both cytoplasmic and membrane proteins. Plays a role in the quality control of integral membrane proteins. In Conexibacter woesei (strain DSM 14684 / CCUG 47730 / CIP 108061 / JCM 11494 / NBRC 100937 / ID131577), this protein is ATP-dependent zinc metalloprotease FtsH 3.